The following is a 951-amino-acid chain: Bromodomain-containing protein 8 (951 aa).

Lys-85 is subject to N6-acetyllysine. The stretch at 97-171 (VRKLTAERVE…ATDAAYQARQ (75 aa)) forms a coiled coil. Positions 161–273 (KATDAAYQAR…TPPPSPLLSE (113 aa)) are disordered. Residues 204–226 (TPTTMEEATSGVTPGTLPSTPVT) are compositionally biased toward polar residues. Phosphoserine is present on residues Ser-456 and Ser-460. A disordered region spans residues 520-547 (EENDDPQSLPGPWEHPIQQERDKPVPLP). Lys-542 participates in a covalent cross-link: Glycyl lysine isopeptide (Lys-Gly) (interchain with G-Cter in SUMO2). N6-acetyllysine; alternate is present on Lys-554. A Glycyl lysine isopeptide (Lys-Gly) (interchain with G-Cter in SUMO1); alternate cross-link involves residue Lys-554. Lys-554 participates in a covalent cross-link: Glycyl lysine isopeptide (Lys-Gly) (interchain with G-Cter in SUMO2); alternate. A Glycyl lysine isopeptide (Lys-Gly) (interchain with G-Cter in SUMO2) cross-link involves residue Lys-582. The tract at residues 584 to 745 (EPTEPEPGMS…PVSESDDGFS (162 aa)) is disordered. The segment covering 610-622 (PELRSQDSDEEPR) has biased composition (basic and acidic residues). Lys-648 participates in a covalent cross-link: Glycyl lysine isopeptide (Lys-Gly) (interchain with G-Cter in SUMO2). Ser-652 is modified (phosphoserine). The segment covering 673 to 688 (ETQHKFEMSDSLKEES) has biased composition (basic and acidic residues). A Glycyl lysine isopeptide (Lys-Gly) (interchain with G-Cter in SUMO2) cross-link involves residue Lys-685. Ser-694, Ser-710, and Ser-714 each carry phosphoserine. Residues 779–884 (IQAQKIWKKA…RDVLEQIQQF (106 aa)) form the Bromo domain. The segment at 900–922 (AKSLRGRDSTRKQDASEKDSVPM) is disordered. The segment covering 904–919 (RGRDSTRKQDASEKDS) has biased composition (basic and acidic residues).

As to quaternary structure, component of the NuA4 histone acetyltransferase complex which contains the catalytic subunit KAT5/TIP60 and the subunits EP400, TRRAP/PAF400, BRD8/SMAP, EPC1, DMAP1/DNMAP1, RUVBL1/TIP49, RUVBL2, ING3, actin, ACTL6A/BAF53A, MORF4L1/MRG15, MORF4L2/MRGX, MRGBP, YEATS4/GAS41, VPS72/YL1 and MEAF6. Component of a NuA4-related complex which contains EP400, TRRAP/PAF400, SRCAP, BRD8/SMAP, EPC1, DMAP1/DNMAP1, RUVBL1/TIP49, RUVBL2, actin, ACTL6A/BAF53A, VPS72 and YEATS4/GAS41. BRD8 isoform 2 interacts with RXRA/NR2B1 and THRB/ERBA2. Component of a SWR1-like complex.

It is found in the nucleus. Functionally, may act as a coactivator during transcriptional activation by hormone-activated nuclear receptors (NR). Stimulates transcriptional activation by AR/DHTR, ESR1/NR3A1, RXRA/NR2B1 and THRB/ERBA2. Component of the NuA4 histone acetyltransferase (HAT) complex which is involved in transcriptional activation of select genes principally by acetylation of nucleosomal histones H4 and H2A. This modification may both alter nucleosome - DNA interactions and promote interaction of the modified histones with other proteins which positively regulate transcription. This complex may be required for the activation of transcriptional programs associated with oncogene and proto-oncogene mediated growth induction, tumor suppressor mediated growth arrest and replicative senescence, apoptosis, and DNA repair. NuA4 may also play a direct role in DNA repair when recruited to sites of DNA damage. Component of a SWR1-like complex that specifically mediates the removal of histone H2A.Z/H2AZ1 from the nucleosome. The polypeptide is Bromodomain-containing protein 8 (Brd8) (Mus musculus (Mouse)).